We begin with the raw amino-acid sequence, 261 residues long: Imidazole glycerol phosphate synthase subunit HisF (261 aa).

Active-site residues include D12 and D131.

It belongs to the HisA/HisF family. As to quaternary structure, heterodimer of HisH and HisF.

Its subcellular location is the cytoplasm. It catalyses the reaction 5-[(5-phospho-1-deoxy-D-ribulos-1-ylimino)methylamino]-1-(5-phospho-beta-D-ribosyl)imidazole-4-carboxamide + L-glutamine = D-erythro-1-(imidazol-4-yl)glycerol 3-phosphate + 5-amino-1-(5-phospho-beta-D-ribosyl)imidazole-4-carboxamide + L-glutamate + H(+). It participates in amino-acid biosynthesis; L-histidine biosynthesis; L-histidine from 5-phospho-alpha-D-ribose 1-diphosphate: step 5/9. Its function is as follows. IGPS catalyzes the conversion of PRFAR and glutamine to IGP, AICAR and glutamate. The HisF subunit catalyzes the cyclization activity that produces IGP and AICAR from PRFAR using the ammonia provided by the HisH subunit. The chain is Imidazole glycerol phosphate synthase subunit HisF from Brucella melitensis biotype 2 (strain ATCC 23457).